Here is a 1188-residue protein sequence, read N- to C-terminus: uncharacterized protein (1188 aa).

3 consecutive transmembrane segments (helical) span residues 73–93 (FVVN…HLLM), 878–898 (IFSV…DSGI), and 1089–1109 (VIPL…SEFI).

The protein localises to the membrane. This is an uncharacterized protein from Saccharomyces cerevisiae (strain ATCC 204508 / S288c) (Baker's yeast).